A 115-amino-acid polypeptide reads, in one-letter code: Large ribosomal subunit protein bL19 (115 aa).

Belongs to the bacterial ribosomal protein bL19 family.

Functionally, this protein is located at the 30S-50S ribosomal subunit interface and may play a role in the structure and function of the aminoacyl-tRNA binding site. This chain is Large ribosomal subunit protein bL19, found in Nitratidesulfovibrio vulgaris (strain DSM 19637 / Miyazaki F) (Desulfovibrio vulgaris).